Here is a 5890-residue protein sequence, read N- to C-terminus: Neuroblast differentiation-associated protein AHNAK (5890 aa).

Met1 carries the N-acetylmethionine modification. The PDZ domain maps to 9 to 90 (ELLLPNWQGS…TVGLKLHRKG (82 aa)). A phosphoserine mark is found at Ser41 and Ser93. Position 101 is a phosphothreonine (Thr101). Ser115 bears the Phosphoserine mark. Residue Lys134 forms a Glycyl lysine isopeptide (Lys-Gly) (interchain with G-Cter in SUMO1); alternate linkage. Lys134 is covalently cross-linked (Glycyl lysine isopeptide (Lys-Gly) (interchain with G-Cter in SUMO2); alternate). Ser135 carries the phosphoserine modification. Thr158 bears the Phosphothreonine mark. At Ser177 the chain carries Phosphoserine. A Glycyl lysine isopeptide (Lys-Gly) (interchain with G-Cter in SUMO2) cross-link involves residue Lys181. Phosphoserine occurs at positions 210, 212, and 216. A Phosphothreonine modification is found at Thr218. 2 positions are modified to phosphoserine: Ser220 and Ser256. Omega-N-methylarginine is present on Arg270. The segment at 314–347 (FGVSTGREGQTPKAGLRVSAPEVSVGHKGGKPGL) is disordered. Phosphoserine is present on residues Ser332, Ser337, Ser379, and Ser470. Thr490 carries the phosphothreonine modification. Residue Ser511 is modified to Phosphoserine. The segment at 545–564 (TPNLEGTLTGPRLGSPSGKT) is disordered. Phosphothreonine is present on residues Thr551 and Thr553. Ser559, Ser570, Ser572, and Ser658 each carry phosphoserine. Residues Lys712 and Lys763 each participate in a glycyl lysine isopeptide (Lys-Gly) (interchain with G-Cter in SUMO2) cross-link. Phosphoserine is present on residues Ser793 and Ser819. Residue Lys891 forms a Glycyl lysine isopeptide (Lys-Gly) (interchain with G-Cter in SUMO2) linkage. Lys942 participates in a covalent cross-link: Glycyl lysine isopeptide (Lys-Gly) (interchain with G-Cter in SUMO1). Residue Lys961 forms a Glycyl lysine isopeptide (Lys-Gly) (interchain with G-Cter in SUMO1); alternate linkage. Lys961 is covalently cross-linked (Glycyl lysine isopeptide (Lys-Gly) (interchain with G-Cter in SUMO2); alternate). A disordered region spans residues 970–993 (KLEGDLKGPKVDVSAPDVEMQGPD). Phosphoserine occurs at positions 1010, 1042, 1068, and 1170. At Thr1192 the chain carries Phosphothreonine. The residue at position 1196 (Ser1196) is a Phosphoserine. Residue Lys1208 is modified to N6-methyllysine. Ser1286 and Ser1298 each carry phosphoserine. The tract at residues 1414–1438 (SGPKMDAEVPDVNIEGPDAKLKGPK) is disordered. Phosphoserine is present on residues Ser1580 and Ser1654. Position 1666 is an N6-methyllysine (Lys1666). Lys1726 is covalently cross-linked (Glycyl lysine isopeptide (Lys-Gly) (interchain with G-Cter in SUMO2)). A disordered region spans residues 1741–1766 (IDVSGPSVDTDAPDLDIEGPEGKLKG). Ser1856 carries the phosphoserine modification. An N6-methyllysine modification is found at Lys1868. Residue Ser1923 is modified to Phosphoserine. N6-methyllysine is present on Lys1935. Residue Thr1986 is modified to Phosphothreonine. Ser1990 bears the Phosphoserine mark. Lys2002 is subject to N6-methyllysine. Lys2062 participates in a covalent cross-link: Glycyl lysine isopeptide (Lys-Gly) (interchain with G-Cter in SUMO2). 2 positions are modified to phosphoserine: Ser2092 and Ser2118. Lys2130 carries the N6-methyllysine modification. Lys2132 is covalently cross-linked (Glycyl lysine isopeptide (Lys-Gly) (interchain with G-Cter in SUMO1)). The residue at position 2138 (Ser2138) is a Phosphoserine. Thr2181 is subject to Phosphothreonine. The residue at position 2287 (Ser2287) is a Phosphoserine. Phosphothreonine is present on Thr2309. Residue Ser2397 is modified to Phosphoserine. A compositionally biased stretch (basic and acidic residues) spans 2410–2419 (KLEGDLKGPH). Positions 2410–2439 (KLEGDLKGPHVDVSGPDIDIEGPEGKLKGP) are disordered. Lys2524 participates in a covalent cross-link: Glycyl lysine isopeptide (Lys-Gly) (interchain with G-Cter in SUMO2). A disordered region spans residues 2542–2567 (SGPKVDIEGPDVNIEGPEGKLKGPKL). Lys2575 participates in a covalent cross-link: Glycyl lysine isopeptide (Lys-Gly) (interchain with G-Cter in SUMO1). At Ser2580 the chain carries Phosphoserine. Lys2594 participates in a covalent cross-link: Glycyl lysine isopeptide (Lys-Gly) (interchain with G-Cter in SUMO1). Ser2600 is modified (phosphoserine). The segment covering 2610–2619 (GPEVDIKGPK) has biased composition (basic and acidic residues). Disordered stretches follow at residues 2610–2633 (GPEV…QGPD) and 2667–2695 (IDVS…GPKF). Ser2670 is modified (phosphoserine). Lys2703 participates in a covalent cross-link: Glycyl lysine isopeptide (Lys-Gly) (interchain with G-Cter in SUMO1). Ser2708 carries the post-translational modification Phosphoserine. Lys2722 participates in a covalent cross-link: Glycyl lysine isopeptide (Lys-Gly) (interchain with G-Cter in SUMO1). 2 positions are modified to phosphoserine: Ser2728 and Ser2798. Phosphothreonine is present on residues Thr2832 and Thr2845. A disordered region spans residues 2853–2882 (VDVTGPKVEGDLKGPEVDLKGPKVDIDVPD). A compositionally biased stretch (basic and acidic residues) spans 2860–2878 (VEGDLKGPEVDLKGPKVDI). A Glycyl lysine isopeptide (Lys-Gly) (interchain with G-Cter in SUMO2) cross-link involves residue Lys2908. The tract at residues 2921–2951 (ADVDVSGPKVDVEGPDVNIEGPEGKLKGPKF) is disordered. Lys2959 participates in a covalent cross-link: Glycyl lysine isopeptide (Lys-Gly) (interchain with G-Cter in SUMO1). Residue Ser3054 is modified to Phosphoserine. A Glycyl lysine isopeptide (Lys-Gly) (interchain with G-Cter in SUMO1) cross-link involves residue Lys3087. The residue at position 3092 (Ser3092) is a Phosphoserine. Positions 3122–3131 (VPDVDIKGPK) are enriched in basic and acidic residues. A disordered region spans residues 3122–3145 (VPDVDIKGPKVDINAPDVDVQGPD). A Phosphoserine modification is found at Ser3182. A Glycyl lysine isopeptide (Lys-Gly) (interchain with G-Cter in SUMO1) cross-link involves residue Lys3215. A phosphoserine mark is found at Ser3220, Ser3362, Ser3409, Ser3412, Ser3426, and Ser3544. Residue Lys3667 forms a Glycyl lysine isopeptide (Lys-Gly) (interchain with G-Cter in SUMO1) linkage. The segment covering 3702–3714 (GPEVDIKGPKVDI) has biased composition (basic and acidic residues). A disordered region spans residues 3702–3730 (GPEVDIKGPKVDIDTPDINIEGSEGKFKG). The residue at position 3716 (Thr3716) is a Phosphothreonine. A Phosphoserine modification is found at Ser3746. Lys3760 is covalently cross-linked (Glycyl lysine isopeptide (Lys-Gly) (interchain with G-Cter in SUMO1)). Residues 3763-3799 (VDVSLPKMEGDLKGPEVDIKGPKVDINAPDVDVQGPD) are disordered. Ser3766 carries the post-translational modification Phosphoserine. Residues 3770-3785 (MEGDLKGPEVDIKGPK) are compositionally biased toward basic and acidic residues. Residue Ser3836 is modified to Phosphoserine. Residue Lys3869 forms a Glycyl lysine isopeptide (Lys-Gly) (interchain with G-Cter in SUMO1) linkage. 2 positions are modified to phosphoserine: Ser3874 and Ser3964. Residue Lys3997 forms a Glycyl lysine isopeptide (Lys-Gly) (interchain with G-Cter in SUMO1) linkage. Ser4002 carries the phosphoserine modification. Residue Lys4016 forms a Glycyl lysine isopeptide (Lys-Gly) (interchain with G-Cter in SUMO1) linkage. Phosphoserine occurs at positions 4022 and 4092. 2 disordered regions span residues 4093 to 4117 (GPKV…GPKF) and 4147 to 4169 (VDVS…KGPK). At Thr4100 the chain carries Phosphothreonine. Residues 4103 to 4117 (IDIHGPEGKLKGPKF) are compositionally biased toward basic and acidic residues. Ser4150 carries the post-translational modification Phosphoserine. Positions 4154-4169 (VEGDLKGPEVDIKGPK) are enriched in basic and acidic residues. Phosphoserine is present on Ser4220. Lys4253 is covalently cross-linked (Glycyl lysine isopeptide (Lys-Gly) (interchain with G-Cter in SUMO1)). Ser4258 carries the post-translational modification Phosphoserine. Residue Lys4272 forms a Glycyl lysine isopeptide (Lys-Gly) (interchain with G-Cter in SUMO1) linkage. Ser4278 and Ser4360 each carry phosphoserine. Glycyl lysine isopeptide (Lys-Gly) (interchain with G-Cter in SUMO1) cross-links involve residues Lys4381 and Lys4400. Residues Ser4406 and Ser4425 each carry the phosphoserine modification. Residues 4416–4447 (GPEIDIKGPSLDIDTPDVNIEGPEGKLKGPKF) form a disordered region. Thr4430 is subject to Phosphothreonine. A Glycyl lysine isopeptide (Lys-Gly) (interchain with G-Cter in SUMO1) cross-link involves residue Lys4455. The residue at position 4460 (Ser4460) is a Phosphoserine. Lys4474 participates in a covalent cross-link: Glycyl lysine isopeptide (Lys-Gly) (interchain with G-Cter in SUMO1). A phosphoserine mark is found at Ser4480 and Ser4486. Positions 4488 to 4508 (LKGPEVDIEGPEGKLKGPKFK) are disordered. Phosphoserine is present on residues Ser4516 and Ser4520. Disordered stretches follow at residues 4550 to 4581 (GPKV…GPKF) and 4611 to 4631 (MDIS…DIRD). At Thr4564 the chain carries Phosphothreonine. Composition is skewed to basic and acidic residues over residues 4567–4581 (IDIH…GPKF) and 4618–4631 (VEGD…DIRD). Phosphoserine is present on residues Ser4684 and Ser4722. Positions 4746–4761 (VEGDLKGPEADIKGPK) are enriched in basic and acidic residues. A disordered region spans residues 4746 to 4768 (VEGDLKGPEADIKGPKVDINTPD). Residue Thr4766 is modified to Phosphothreonine. At Ser4812 the chain carries Phosphoserine. The segment at 4880–4904 (GPEVDLKGPRLDFEGPDAKLSGPSL) is disordered. The segment covering 4881–4896 (PEVDLKGPRLDFEGPD) has biased composition (basic and acidic residues). 5 positions are modified to phosphoserine: Ser4900, Ser4903, Ser4908, Ser4953, and Ser4960. The short motif at 4971 to 4979 (KIPKFKKPK) is the Nuclear localization signal element. A phosphoserine mark is found at Ser4986 and Ser4993. The residue at position 5009 (Thr5009) is a Phosphothreonine. 2 consecutive short sequence motifs (nuclear localization signal) follow at residues 5019–5027 (KKSKFKMPK) and 5034–5039 (KIKAKK). 11 positions are modified to phosphoserine: Ser5077, Ser5099, Ser5110, Ser5125, Ser5261, Ser5318, Ser5332, Ser5369, Ser5386, Ser5393, and Ser5400. Thr5415 carries the phosphothreonine modification. Ser5448, Ser5519, Ser5530, Ser5552, Ser5577, and Ser5620 each carry phosphoserine. A Glycyl lysine isopeptide (Lys-Gly) (interchain with G-Cter in SUMO2) cross-link involves residue Lys5623. Phosphoserine is present on Ser5641. The Nuclear localization signal signature appears at 5706–5716 (KLKKSKIKMPK). A disordered region spans residues 5716–5890 (KFNFSKPKGK…VELSVSTKKE (175 aa)). Residues Ser5731, Ser5739, Ser5749, Ser5752, Ser5762, and Ser5763 each carry the phosphoserine modification. A Nuclear localization signal motif is present at residues 5772-5779 (KSKKPRHR). Residues Ser5780, Ser5782, Ser5790, and Ser5793 each carry the phosphoserine modification. A phosphothreonine mark is found at Thr5794 and Thr5824. Residues Ser5830 and Ser5841 each carry the phosphoserine modification. A Phosphothreonine modification is found at Thr5845. Phosphoserine occurs at positions 5851, 5857, and 5863. The span at 5854 to 5870 (SLASKKSRLSSSSSNDS) shows a compositional bias: low complexity.

In terms of assembly, interacts with DYSF; the interaction is direct and Ca(2+)-independent.

The protein localises to the nucleus. Functionally, may be required for neuronal cell differentiation. This is Neuroblast differentiation-associated protein AHNAK (AHNAK) from Homo sapiens (Human).